We begin with the raw amino-acid sequence, 472 residues long: Glycylpeptide N-tetradecanoyltransferase (472 aa).

Disordered stretches follow at residues 1-23 (MPNENAEDLSGQELKQKAKEVAD) and 43-65 (STNAAGNEDAEQPDGAKNEASVS). Tetradecanoyl-CoA is bound by residues F93, W94, F223, L224, C225, V226, S232, R234, V235, and A236.

It belongs to the NMT family.

The protein localises to the membrane. It catalyses the reaction N-terminal glycyl-[protein] + tetradecanoyl-CoA = N-tetradecanoylglycyl-[protein] + CoA + H(+). Functionally, adds a myristoyl group (tetradecanoyl group) to the N-terminal glycine residue of certain cellular proteins. Such protein modification are critical for the developmental processes that involve cell shape changes and movement. The protein is Glycylpeptide N-tetradecanoyltransferase (Nmt) of Drosophila melanogaster (Fruit fly).